The chain runs to 357 residues: tRNA-specific 2-thiouridylase MnmA (357 aa).

ATP-binding positions include 7-14 (GLSGGVDS) and L33. Catalysis depends on C94, which acts as the Nucleophile. C94 and C193 are joined by a disulfide. G119 is an ATP binding site. The interval 143–145 (KDQ) is interaction with tRNA. C193 functions as the Cysteine persulfide intermediate in the catalytic mechanism. The tract at residues 298 to 299 (RY) is interaction with tRNA.

Belongs to the MnmA/TRMU family.

The protein localises to the cytoplasm. It carries out the reaction S-sulfanyl-L-cysteinyl-[protein] + uridine(34) in tRNA + AH2 + ATP = 2-thiouridine(34) in tRNA + L-cysteinyl-[protein] + A + AMP + diphosphate + H(+). Functionally, catalyzes the 2-thiolation of uridine at the wobble position (U34) of tRNA, leading to the formation of s(2)U34. This chain is tRNA-specific 2-thiouridylase MnmA, found in Synechococcus sp. (strain ATCC 27144 / PCC 6301 / SAUG 1402/1) (Anacystis nidulans).